The following is a 151-amino-acid chain: Phosphoribosyl-AMP cyclohydrolase (151 aa).

D94 is a binding site for Mg(2+). A Zn(2+)-binding site is contributed by C95. The Mg(2+) site is built by D96 and D98. C112 and C119 together coordinate Zn(2+).

This sequence belongs to the PRA-CH family. In terms of assembly, homodimer. Mg(2+) is required as a cofactor. It depends on Zn(2+) as a cofactor.

It localises to the cytoplasm. It carries out the reaction 1-(5-phospho-beta-D-ribosyl)-5'-AMP + H2O = 1-(5-phospho-beta-D-ribosyl)-5-[(5-phospho-beta-D-ribosylamino)methylideneamino]imidazole-4-carboxamide. It functions in the pathway amino-acid biosynthesis; L-histidine biosynthesis; L-histidine from 5-phospho-alpha-D-ribose 1-diphosphate: step 3/9. Its function is as follows. Catalyzes the hydrolysis of the adenine ring of phosphoribosyl-AMP. The polypeptide is Phosphoribosyl-AMP cyclohydrolase (Rhodopseudomonas palustris (strain ATCC BAA-98 / CGA009)).